Here is a 131-residue protein sequence, read N- to C-terminus: UPF0102 protein YraN (131 aa).

This sequence belongs to the UPF0102 family.

The chain is UPF0102 protein YraN from Salmonella typhi.